A 163-amino-acid polypeptide reads, in one-letter code: NADH-quinone oxidoreductase subunit I (163 aa).

4Fe-4S ferredoxin-type domains are found at residues 55-84 (RRYE…IESE) and 94-123 (TQYD…ETRV). The [4Fe-4S] cluster site is built by C64, C67, C70, C74, C103, C106, C109, and C113.

It belongs to the complex I 23 kDa subunit family. In terms of assembly, NDH-1 is composed of 14 different subunits. Subunits NuoA, H, J, K, L, M, N constitute the membrane sector of the complex. Requires [4Fe-4S] cluster as cofactor.

It localises to the cell inner membrane. The enzyme catalyses a quinone + NADH + 5 H(+)(in) = a quinol + NAD(+) + 4 H(+)(out). Functionally, NDH-1 shuttles electrons from NADH, via FMN and iron-sulfur (Fe-S) centers, to quinones in the respiratory chain. The immediate electron acceptor for the enzyme in this species is believed to be ubiquinone. Couples the redox reaction to proton translocation (for every two electrons transferred, four hydrogen ions are translocated across the cytoplasmic membrane), and thus conserves the redox energy in a proton gradient. The chain is NADH-quinone oxidoreductase subunit I from Hydrogenovibrio crunogenus (strain DSM 25203 / XCL-2) (Thiomicrospira crunogena).